The primary structure comprises 56 residues: Large ribosomal subunit protein bL33 (56 aa).

The protein belongs to the bacterial ribosomal protein bL33 family.

This Tropheryma whipplei (strain TW08/27) (Whipple's bacillus) protein is Large ribosomal subunit protein bL33.